We begin with the raw amino-acid sequence, 356 residues long: Phospho-N-acetylmuramoyl-pentapeptide-transferase (356 aa).

Transmembrane regions (helical) follow at residues 27 to 47 (AAAI…IGWM), 74 to 94 (MGGL…MDFA), 97 to 117 (YVWA…IDDY), 128 to 148 (VSGK…CYLI), 164 to 184 (PVID…VGTA), 201 to 221 (VIIA…AVFA), 241 to 261 (AIIG…AIFM), 284 to 304 (IVLG…IIQV), and 333 to 353 (TVVI…LATL).

It belongs to the glycosyltransferase 4 family. MraY subfamily. Mg(2+) is required as a cofactor.

The protein resides in the cell inner membrane. The catalysed reaction is UDP-N-acetyl-alpha-D-muramoyl-L-alanyl-gamma-D-glutamyl-meso-2,6-diaminopimeloyl-D-alanyl-D-alanine + di-trans,octa-cis-undecaprenyl phosphate = di-trans,octa-cis-undecaprenyl diphospho-N-acetyl-alpha-D-muramoyl-L-alanyl-D-glutamyl-meso-2,6-diaminopimeloyl-D-alanyl-D-alanine + UMP. It participates in cell wall biogenesis; peptidoglycan biosynthesis. Its function is as follows. Catalyzes the initial step of the lipid cycle reactions in the biosynthesis of the cell wall peptidoglycan: transfers peptidoglycan precursor phospho-MurNAc-pentapeptide from UDP-MurNAc-pentapeptide onto the lipid carrier undecaprenyl phosphate, yielding undecaprenyl-pyrophosphoryl-MurNAc-pentapeptide, known as lipid I. This Zymomonas mobilis subsp. mobilis (strain ATCC 31821 / ZM4 / CP4) protein is Phospho-N-acetylmuramoyl-pentapeptide-transferase.